A 437-amino-acid chain; its full sequence is Doublesex- and mab-3-related transcription factor A2 (437 aa).

The segment at residues 49–96 (CARCRNHGVVSALKGHKRYCRWKDCMCAKCTLIAERQRVMAAQVALRR) is a DNA-binding region (DM). A disordered region spans residues 160 to 253 (IPRSMTPQLP…DPSSSSLARQ (94 aa)). Low complexity-rich tracts occupy residues 179–201 (SEPV…SGSE) and 223–235 (SPSL…SESG). Residues 254–289 (RTPINILTRVFPAQKRSVLELVLQGCGGDVVQAIEQ) enclose the DMA domain.

The protein belongs to the DMRT family.

It is found in the nucleus. In terms of biological role, may be involved in sexual development. This chain is Doublesex- and mab-3-related transcription factor A2 (dmrta2), found in Xenopus laevis (African clawed frog).